Here is a 449-residue protein sequence, read N- to C-terminus: tRNA (guanine(37)-N(1))-methyltransferase (449 aa).

S-adenosyl-L-methionine is bound by residues histidine 216, 254-255, 282-283, and asparagine 345; these read DL and DG.

This sequence belongs to the class I-like SAM-binding methyltransferase superfamily. TRM5/TYW2 family. In terms of assembly, monomer.

Its subcellular location is the mitochondrion matrix. It localises to the nucleus. The protein localises to the cytoplasm. The enzyme catalyses guanosine(37) in tRNA + S-adenosyl-L-methionine = N(1)-methylguanosine(37) in tRNA + S-adenosyl-L-homocysteine + H(+). Specifically methylates the N1 position of guanosine-37 in various cytoplasmic and mitochondrial tRNAs. Methylation is not dependent on the nature of the nucleoside 5' of the target nucleoside. This is the first step in the biosynthesis of wybutosine (yW), a modified base adjacent to the anticodon of tRNAs and required for accurate decoding. This is tRNA (guanine(37)-N(1))-methyltransferase from Candida albicans (strain WO-1) (Yeast).